Consider the following 352-residue polypeptide: Neuronal growth regulator 1 (352 aa).

An N-terminal signal peptide occupies residues 1 to 35; that stretch reads MVPLVRGAGGSHQWLAAVLLGLCCLLPAGRLAAPG. 3 Ig-like C2-type domains span residues 36-132, 137-219, and 223-311; these read GDFP…VHLT, PKIF…KVTV, and PTIQ…LPLN. Cys58 and Cys116 are oxidised to a cystine. Asn71 and Asn153 each carry an N-linked (GlcNAc...) asparagine glycan. 2 disulfide bridges follow: Cys158/Cys201 and Cys243/Cys295. N-linked (GlcNAc...) asparagine glycosylation is found at Asn273, Asn284, Asn292, and Asn305. Gly322 carries the GPI-anchor amidated glycine lipid modification. The propeptide at 323–352 is removed in mature form; the sequence is DAEVLFSCWYLVLTLSSLTSIFYLKNIILH.

Belongs to the immunoglobulin superfamily. IgLON family. Interacts with CEPU-1 and LAMP. Glycosylated. In terms of tissue distribution, expressed in embryonic retina, telencephalon, tectum, cerebellum and diencephalon (at protein level).

The protein resides in the cell membrane. May be involved in cell-adhesion. May participate in the regulation of neurite outgrowth in the developing brain. This Gallus gallus (Chicken) protein is Neuronal growth regulator 1 (NEGR1).